A 436-amino-acid polypeptide reads, in one-letter code: Probable sodium/metabolite cotransporter BASS4, chloroplastic (436 aa).

The transit peptide at 1–47 directs the protein to the chloroplast; sequence MAIASTLASTQNPFLCLRQPPSPGNRSVVFRRCQDPCGRRWISRSIR. Helical transmembrane passes span 109 to 129, 131 to 151, 157 to 177, 195 to 215, 225 to 245, 257 to 277, 297 to 314, 328 to 348, and 403 to 423; these read FLPLALVSGVGLGFANPTLGC, ADKYSFTKISTCGIFIISGLT, IGAAVKGWPLGLFGLISILLL, LVTGLGIFCCMPTTLSSGVAL, LALAVTVASNLLGILTIPFWV, FPTDQLFRSLIVTLLIPLIIG, LFSKINAICLSLVPWIQV, VFLAAVGIGILLHLSLLAFNA, and PCVAAHLNQIMIDSVLVNLWL.

Belongs to the bile acid:sodium symporter (BASS) (TC 2.A.28) family.

It is found in the membrane. Its subcellular location is the plastid. The protein resides in the chloroplast envelope. In terms of biological role, may function as sodium-coupled metabolite transporter across the chloroplast envelope. The chain is Probable sodium/metabolite cotransporter BASS4, chloroplastic (BASS4) from Arabidopsis thaliana (Mouse-ear cress).